The sequence spans 282 residues: tRNA U34 carboxymethyltransferase (282 aa).

Carboxy-S-adenosyl-L-methionine-binding positions include Lys54, Trp68, Lys73, Gly92, 114 to 116 (DPS), Tyr161, and Arg276.

This sequence belongs to the class I-like SAM-binding methyltransferase superfamily. CmoB family. In terms of assembly, homotetramer.

The catalysed reaction is carboxy-S-adenosyl-L-methionine + 5-hydroxyuridine(34) in tRNA = 5-carboxymethoxyuridine(34) in tRNA + S-adenosyl-L-homocysteine + H(+). Functionally, catalyzes carboxymethyl transfer from carboxy-S-adenosyl-L-methionine (Cx-SAM) to 5-hydroxyuridine (ho5U) to form 5-carboxymethoxyuridine (cmo5U) at position 34 in tRNAs. This chain is tRNA U34 carboxymethyltransferase, found in Campylobacter fetus subsp. fetus (strain 82-40).